We begin with the raw amino-acid sequence, 871 residues long: Alanine--tRNA ligase (871 aa).

Residues His559, His563, Cys661, and His665 each contribute to the Zn(2+) site.

It belongs to the class-II aminoacyl-tRNA synthetase family. Requires Zn(2+) as cofactor.

It is found in the cytoplasm. The enzyme catalyses tRNA(Ala) + L-alanine + ATP = L-alanyl-tRNA(Ala) + AMP + diphosphate. Catalyzes the attachment of alanine to tRNA(Ala) in a two-step reaction: alanine is first activated by ATP to form Ala-AMP and then transferred to the acceptor end of tRNA(Ala). Also edits incorrectly charged Ser-tRNA(Ala) and Gly-tRNA(Ala) via its editing domain. The chain is Alanine--tRNA ligase from Aquifex pyrophilus.